A 471-amino-acid polypeptide reads, in one-letter code: MSKKYDAGVKEYRDTYWTPDYVPLDTDLLACFKCTGQEGVPKEEVAAAVAAESSTGTWSTVWSELLTDLDFYKGRCYRIEDVPGDKESFYAFIAYPLDLFEEGSITNVLTSLVGNVFGFKALRHLRLEDIRFPLAFIKTCYGPPNGIVVERDRMNKYGRPLLGCTIKPKLGLSGKNYGRVVYECLRGGLDFTKDDENINSQPFQRWQNRFEFVAEAIRLAEQETGEKKGHYLNVTANTPEEMYERAEFAKELGMPIVMHDFITGGFTANTGLSKWCRKNGMLLHIHRAMHAVIDRHPKHGIHFRVLAKCLRLSGGDQLHTGTVVGKLEGDRQTTLGYIDQLRESFVPEDRSRGNFFDQDWGSMPGVFAVASGGIHVWHMPALVTIFGDDSVLQFGGGTHGHPWGSAAGAAANRVALEACVKARNAGRHLEKESRDILMEAAKHSPELAIALETWKEIKFEFDTVDKLDVQS.

Positions 115 and 165 each coordinate substrate. K167 serves as the catalytic Proton acceptor. K169 provides a ligand contact to substrate. The Mg(2+) site is built by K193, D195, and E196. Residue K193 is modified to N6-carboxylysine. H286 acts as the Proton acceptor in catalysis. The substrate site is built by R287, H319, and S371.

This sequence belongs to the RuBisCO large chain family. Type I subfamily. In terms of assembly, heterohexadecamer of 8 large chains and 8 small chains. Requires Mg(2+) as cofactor.

The protein localises to the carboxysome. The enzyme catalyses 2 (2R)-3-phosphoglycerate + 2 H(+) = D-ribulose 1,5-bisphosphate + CO2 + H2O. The catalysed reaction is D-ribulose 1,5-bisphosphate + O2 = 2-phosphoglycolate + (2R)-3-phosphoglycerate + 2 H(+). Its function is as follows. RuBisCO catalyzes two reactions: the carboxylation of D-ribulose 1,5-bisphosphate, the primary event in carbon dioxide fixation, as well as the oxidative fragmentation of the pentose substrate in the photorespiration process. Both reactions occur simultaneously and in competition at the same active site. The chain is Ribulose bisphosphate carboxylase large chain from Synechococcus sp. (strain RCC307).